A 207-amino-acid chain; its full sequence is N-(5'-phosphoribosyl)anthranilate isomerase (207 aa).

This sequence belongs to the TrpF family.

The enzyme catalyses N-(5-phospho-beta-D-ribosyl)anthranilate = 1-(2-carboxyphenylamino)-1-deoxy-D-ribulose 5-phosphate. It functions in the pathway amino-acid biosynthesis; L-tryptophan biosynthesis; L-tryptophan from chorismate: step 3/5. This Geotalea daltonii (strain DSM 22248 / JCM 15807 / FRC-32) (Geobacter daltonii) protein is N-(5'-phosphoribosyl)anthranilate isomerase.